A 325-amino-acid chain; its full sequence is MAKVWQFSEAEELFHLPFLDLLYSAQHVHRENFPHNEVQLAMLLSVKTGGCPENCSYCPQSAHYDTGLRKEPVMHVEKVLEAAKRAVELGATRFCIGAAWRGPRGKDLDIVCEMISRIKKLGLETCASLGLLSYEQAVSLKAAGLDFYNHNIDTSQEYYSKIITTRRFSDRIETLENVAKAGLKICSGGILGMGESNEDRIKMLVELSHLSFPPESIPINKLIPIPGTPLAEKNAVDPLDFVRIIALARIMFPKSYVRLSAGRESMSDELQTLCFIAGANSIFYGEKLLTSANSDPESDEKLLLKLGLLREKSKTAVDCSINLGS.

The Radical SAM core domain occupies 36–254 (NEVQLAMLLS…IALARIMFPK (219 aa)). Positions 51, 55, and 58 each coordinate [4Fe-4S] cluster. [2Fe-2S] cluster is bound by residues C95, C126, C186, and R258.

Belongs to the radical SAM superfamily. Biotin synthase family. As to quaternary structure, homodimer. It depends on [4Fe-4S] cluster as a cofactor. Requires [2Fe-2S] cluster as cofactor.

The catalysed reaction is (4R,5S)-dethiobiotin + (sulfur carrier)-SH + 2 reduced [2Fe-2S]-[ferredoxin] + 2 S-adenosyl-L-methionine = (sulfur carrier)-H + biotin + 2 5'-deoxyadenosine + 2 L-methionine + 2 oxidized [2Fe-2S]-[ferredoxin]. It functions in the pathway cofactor biosynthesis; biotin biosynthesis; biotin from 7,8-diaminononanoate: step 2/2. Functionally, catalyzes the conversion of dethiobiotin (DTB) to biotin by the insertion of a sulfur atom into dethiobiotin via a radical-based mechanism. The chain is Biotin synthase from Neorickettsia sennetsu (strain ATCC VR-367 / Miyayama) (Ehrlichia sennetsu).